We begin with the raw amino-acid sequence, 195 residues long: Thymidylate kinase (195 aa).

Residue G7–S14 participates in ATP binding.

It belongs to the thymidylate kinase family.

It catalyses the reaction dTMP + ATP = dTDP + ADP. In terms of biological role, phosphorylation of dTMP to form dTDP in both de novo and salvage pathways of dTTP synthesis. In Campylobacter hominis (strain ATCC BAA-381 / DSM 21671 / CCUG 45161 / LMG 19568 / NCTC 13146 / CH001A), this protein is Thymidylate kinase.